The following is a 372-amino-acid chain: Envelope phospholipase OPG057 (372 aa).

The YPPL motif lies at 153–156 (YPPL). 2 S-palmitoyl cysteine; by host lipidation sites follow: Cys-185 and Cys-186. The region spanning 307 to 334 (FTIQNNTKLLIVDDEYVHITSANFDGTH) is the PLD phosphodiesterase domain.

It belongs to the orthopoxvirus OPG057 family. As to quaternary structure, interacts with protein OPG190. In terms of processing, palmitoylated. Attachment of the palmitate moiety is essential for correct intracellular targeting and protein function.

Its subcellular location is the virion membrane. The protein localises to the host Golgi apparatus. It localises to the host trans-Golgi network. The protein resides in the host endoplasmic reticulum membrane. It catalyses the reaction a 1,2-diacyl-sn-glycero-3-phosphocholine + H2O = a 1,2-diacyl-sn-glycero-3-phosphate + choline + H(+). Its function is as follows. Major envelope protein that plays a role in the biogenesis of the viral double membrane and in egress of virus from the host cell. Produces the wrapped form of virus that is required for cell-to-cell spread. Acts as a lipase with broad specificity including phospholipase C, phospholipase A, and triacylglycerol lipase activities. The chain is Envelope phospholipase OPG057 (OPG057) from Vaccinia virus (strain Copenhagen) (VACV).